The primary structure comprises 367 residues: Probable butyrate kinase (367 aa).

The protein belongs to the acetokinase family.

Its subcellular location is the cytoplasm. The catalysed reaction is butanoate + ATP = butanoyl phosphate + ADP. The protein is Probable butyrate kinase of Bacillus cereus (strain B4264).